The primary structure comprises 541 residues: Protein yellow (541 aa).

The first 21 residues, 1–21 (MFQDKGWILVTLITLVTPSWA), serve as a signal peptide directing secretion. N144 and N215 each carry an N-linked (GlcNAc...) asparagine glycan. The disordered stretch occupies residues 443 to 463 (QKPQTSWASSPPPPSRTYLPA).

Belongs to the major royal jelly protein family.

The protein localises to the secreted. In terms of biological role, controls the pigmentation pattern of the adult cuticle and larval mouth parts. The sequence is that of Protein yellow (y) from Drosophila melanogaster (Fruit fly).